We begin with the raw amino-acid sequence, 646 residues long: Pentatricopeptide repeat-containing protein At5g48910 (646 aa).

The segment at 1-24 (MNPTQTLFSPGGNSPASSPASHPS) is disordered. Residues 9-24 (SPGGNSPASSPASHPS) show a composition bias toward low complexity. PPR repeat units follow at residues 54 to 88 (DTLA…MPQR), 89 to 126 (NCFS…FVEP), 127 to 161 (NRFT…GFGG), 162 to 197 (DEFV…DMVV), 207 to 237 (EIVL…MRQR), 238 to 272 (SVVS…DIRP), 273 to 307 (NYVT…GIRI), 308 to 338 (DDVL…LPRE), 339 to 373 (NVIT…GVRP), 374 to 409 (SDVA…GLEP), and 410 to 440 (RIEH…MPIK). The segment at 445 to 520 (IWKALLGACR…DPGCSLIDID (76 aa)) is type E motif. Residues 521–551 (GVLHEFVVEDDSHPKAKEINSMLVEISDKLR) are type E(+) motif. Residues 552 to 646 (LAGYRPITTQ…DGSCSCMDYW (95 aa)) form a type DYW motif region.

This sequence belongs to the PPR family. PCMP-H subfamily.

The protein is Pentatricopeptide repeat-containing protein At5g48910 (PCMP-H38) of Arabidopsis thaliana (Mouse-ear cress).